The chain runs to 103 residues: ATP synthase F(0) complex subunit g, mitochondrial (103 aa).

Ala-2 carries the post-translational modification N-acetylalanine. N6-acetyllysine is present on residues Lys-11, Lys-24, Lys-35, and Lys-54.

Component of the ATP synthase complex composed at least of ATP5F1A/subunit alpha, ATP5F1B/subunit beta, ATP5MC1/subunit c (homooctomer), MT-ATP6/subunit a, MT-ATP8/subunit 8, ATP5ME/subunit e, ATP5MF/subunit f, ATP5MG/subunit g, ATP5MK/subunit k, ATP5MJ/subunit j, ATP5F1C/subunit gamma, ATP5F1D/subunit delta, ATP5F1E/subunit epsilon, ATP5PF/subunit F6, ATP5PB/subunit b, ATP5PD/subunit d, ATP5PO/subunit OSCP. ATP synthase complex consists of a soluble F(1) head domain (subunits alpha(3) and beta(3)) - the catalytic core - and a membrane F(0) domain - the membrane proton channel (subunits c, a, 8, e, f, g, k and j). These two domains are linked by a central stalk (subunits gamma, delta, and epsilon) rotating inside the F1 region and a stationary peripheral stalk (subunits F6, b, d, and OSCP).

Its subcellular location is the mitochondrion. The protein localises to the mitochondrion inner membrane. Functionally, subunit g, of the mitochondrial membrane ATP synthase complex (F(1)F(0) ATP synthase or Complex V) that produces ATP from ADP in the presence of a proton gradient across the membrane which is generated by electron transport complexes of the respiratory chain. ATP synthase complex consist of a soluble F(1) head domain - the catalytic core - and a membrane F(1) domain - the membrane proton channel. These two domains are linked by a central stalk rotating inside the F(1) region and a stationary peripheral stalk. During catalysis, ATP synthesis in the catalytic domain of F(1) is coupled via a rotary mechanism of the central stalk subunits to proton translocation. In vivo, can only synthesize ATP although its ATP hydrolase activity can be activated artificially in vitro. Part of the complex F(0) domain. This is ATP synthase F(0) complex subunit g, mitochondrial from Bos taurus (Bovine).